We begin with the raw amino-acid sequence, 186 residues long: Adenylate kinase (186 aa).

10 to 15 (GVGKGT) contributes to the ATP binding site. The tract at residues 30–59 (STGDIFRYNIKNKTELGLEAMSYTDKGELV) is NMP. Residues Thr-31, Arg-36, 57–59 (ELV), 85–88 (GYPR), and Gln-92 each bind AMP. Residues 126 to 136 (KRAAEQGRADD) form an LID region. Residue Arg-127 participates in ATP binding. Residues Arg-133 and Arg-144 each contribute to the AMP site. Residue Gly-172 coordinates ATP.

It belongs to the adenylate kinase family. As to quaternary structure, monomer.

The protein resides in the cytoplasm. The enzyme catalyses AMP + ATP = 2 ADP. The protein operates within purine metabolism; AMP biosynthesis via salvage pathway; AMP from ADP: step 1/1. In terms of biological role, catalyzes the reversible transfer of the terminal phosphate group between ATP and AMP. Plays an important role in cellular energy homeostasis and in adenine nucleotide metabolism. The chain is Adenylate kinase from Bifidobacterium longum (strain NCC 2705).